The following is a 369-amino-acid chain: 4-hydroxy-3-methylbut-2-en-1-yl diphosphate synthase (flavodoxin) (369 aa).

Positions 270, 273, 305, and 312 each coordinate [4Fe-4S] cluster.

Belongs to the IspG family. [4Fe-4S] cluster is required as a cofactor.

It catalyses the reaction (2E)-4-hydroxy-3-methylbut-2-enyl diphosphate + oxidized [flavodoxin] + H2O + 2 H(+) = 2-C-methyl-D-erythritol 2,4-cyclic diphosphate + reduced [flavodoxin]. The protein operates within isoprenoid biosynthesis; isopentenyl diphosphate biosynthesis via DXP pathway; isopentenyl diphosphate from 1-deoxy-D-xylulose 5-phosphate: step 5/6. Its function is as follows. Converts 2C-methyl-D-erythritol 2,4-cyclodiphosphate (ME-2,4cPP) into 1-hydroxy-2-methyl-2-(E)-butenyl 4-diphosphate. This Pseudomonas putida (strain GB-1) protein is 4-hydroxy-3-methylbut-2-en-1-yl diphosphate synthase (flavodoxin).